The primary structure comprises 366 residues: RISC-loading complex subunit TARBP2 (366 aa).

Sufficient for interaction with PRKRA regions lie at residues 22 to 105 (MLAA…EPAL), 152 to 234 (SPQQ…DARD), and 287 to 366 (LGAL…AGSK). Residues 30–97 (TPISLLQEYG…AEVALKHLKG (68 aa)) enclose the DRBM 1 domain. A disordered region spans residues 135 to 158 (PSAVPTRSSPMEVQPPVSPQQSEC). At S152 the chain carries Phosphoserine. DRBM domains follow at residues 159–227 (NPVG…RVHT) and 293–361 (ACCS…YLKI). The tract at residues 228 to 366 (VPLDARDGNE…QYLKIMAGSK (139 aa)) is sufficient for interaction with DICER1.

It belongs to the TARBP2 family. Self-associates. Component of the RISC loading complex (RLC), or micro-RNA (miRNA) loading complex (miRLC), which is composed of DICER1, AGO2 and TARBP2. Note that the trimeric RLC/miRLC is also referred to as RISC. Interacts with EIF2AK2/PKR and inhibits its protein kinase activity. Interacts with DHX9 and PRKRA. Interacts with DICER1, AGO2, MOV10, EIF6 and RPL7A (60S ribosome subunit); they form a large RNA-induced silencing complex (RISC). Interacts with IRF7; this interaction prevents IRF7 phosphorylation and activation.

The protein resides in the cytoplasm. The protein localises to the perinuclear region. It localises to the nucleus. Required for formation of the RNA induced silencing complex (RISC). Component of the RISC loading complex (RLC), also known as the micro-RNA (miRNA) loading complex (miRLC), which is composed of DICER1, AGO2 and TARBP2. Within the RLC/miRLC, DICER1 and TARBP2 are required to process precursor miRNAs (pre-miRNAs) to mature miRNAs and then load them onto AGO2. AGO2 bound to the mature miRNA constitutes the minimal RISC and may subsequently dissociate from DICER1 and TARBP2. May also play a role in the production of short interfering RNAs (siRNAs) from double-stranded RNA (dsRNA) by DICER1. Binds in vitro to the PRM1 3'-UTR. Seems to act as a repressor of translation. For some pre-miRNA substrates, may also alter the choice of cleavage site by DICER1. Negatively regulates IRF7-mediated IFN-beta signaling triggered by viral infection by inhibiting the phosphorylation of IRF7 and promoting its 'Lys'-48-linked ubiquitination and degradation. The polypeptide is RISC-loading complex subunit TARBP2 (Bos taurus (Bovine)).